The chain runs to 336 residues: Nitrilase (336 aa).

Residues 5 to 278 enclose the CN hydrolase domain; that stretch reads LKVACVQAAP…EGLLYATLDP (274 aa). Glutamate 45 serves as the catalytic Proton acceptor. The active-site Proton donor is the lysine 127. Residue cysteine 161 is the Nucleophile of the active site.

The protein belongs to the carbon-nitrogen hydrolase superfamily. Nitrilase family.

The enzyme catalyses a nitrile + 2 H2O = a carboxylate + NH4(+). It catalyses the reaction (indol-3-yl)acetonitrile + 2 H2O = (indol-3-yl)acetate + NH4(+). The catalysed reaction is phenylpropanonitrile + 2 H2O = 3-phenylpropanoate + NH4(+). Functionally, arylacetonitrilase which is capable of hydrolyzing indole-3-acetonitrile (IAN) to the plant hormone indole-3-acetate (IAA), and allows the plant pathogenic bacterium to use IAN as a sole nitrogen source. Is also able to hydrolyze phenylpropionitrile (PPN), allowing the use of this compound as a sole nitrogen source. This enzyme may represent an additional mechanism for IAA biosynthesis or may be used to degrade and assimilate aldoximes and nitriles produced during host plant secondary metabolism. The sequence is that of Nitrilase from Pseudomonas syringae pv. syringae (strain B728a).